The chain runs to 1342 residues: Receptor tyrosine-protein kinase erbB-3 (1342 aa).

Positions 1–19 (MRANDALQVLGLLFSLARG) are cleaved as a signal peptide. Residues 20-643 (SEVGNSQAVC…LVLIGKTHLT (624 aa)) are Extracellular-facing. An intrachain disulfide couples Cys29 to Cys56. N-linked (GlcNAc...) asparagine glycosylation occurs at Asn126. Intrachain disulfides connect Cys156–Cys183, Cys186–Cys194, Cys190–Cys202, Cys210–Cys218, Cys214–Cys226, Cys227–Cys235, Cys231–Cys243, Cys246–Cys255, Cys259–Cys286, Cys290–Cys301, Cys305–Cys320, and Cys323–Cys327. Residue Asn250 is glycosylated (N-linked (GlcNAc...) asparagine). 5 N-linked (GlcNAc...) asparagine glycosylation sites follow: Asn353, Asn408, Asn414, Asn437, and Asn469. 10 disulfide bridges follow: Cys500–Cys509, Cys504–Cys517, Cys520–Cys529, Cys533–Cys549, Cys552–Cys565, Cys556–Cys573, Cys576–Cys585, Cys589–Cys610, Cys613–Cys621, and Cys617–Cys629. Asn522 carries N-linked (GlcNAc...) asparagine glycosylation. Residue Asn566 is glycosylated (N-linked (GlcNAc...) asparagine). The N-linked (GlcNAc...) asparagine glycan is linked to Asn616. The chain crosses the membrane as a helical span at residues 644 to 664 (MALTVIAGLVVIFMMLGGTFL). At 665 to 1342 (YWRGRRIQNK…LFPKANAQRT (678 aa)) the chain is on the cytoplasmic side. Position 686 is a phosphoserine (Ser686). Positions 709-966 (LRKLKVLGSG…TFKELANEFT (258 aa)) constitute a Protein kinase domain. Residues 715-723 (LGSGVFGTV), Lys742, 788-790 (QYL), and 834-839 (NLAARN) contribute to the ATP site. Asn834 serves as the catalytic Proton acceptor. 2 disordered regions span residues 980–999 (RESGPGIAPGPEPHGLTNKK) and 1033–1152 (LPVG…PGLE). Ser982 is modified (phosphoserine). Over residues 1042 to 1075 (RGSQSLLSPSSGYMPMNQGNLGESCQESAVSGSS) the composition is skewed to polar residues.

Belongs to the protein kinase superfamily. Tyr protein kinase family. EGF receptor subfamily. As to quaternary structure, monomer and homodimer. Heterodimer with each of the other ERBB receptors (Potential). Interacts with CSPG5. Interacts with GRB7. Interacts with MUC1. Interacts with MYOC. Interacts with isoform 2 of PA2G4. Found in a ternary complex with NRG1 and ITGAV:ITGB3 or ITGA6:ITGB4. Post-translationally, autophosphorylated. Ligand-binding increases phosphorylation on tyrosine residues and promotes its association with the p85 subunit of phosphatidylinositol 3-kinase. As to expression, epithelial tissues and brain.

The protein localises to the cell membrane. It localises to the secreted. The catalysed reaction is L-tyrosyl-[protein] + ATP = O-phospho-L-tyrosyl-[protein] + ADP + H(+). In terms of biological role, tyrosine-protein kinase that plays an essential role as cell surface receptor for neuregulins. Binds to neuregulin-1 (NRG1) and is activated by it; ligand-binding increases phosphorylation on tyrosine residues and promotes its association with the p85 subunit of phosphatidylinositol 3-kinase. May also be activated by CSPG5. Involved in the regulation of myeloid cell differentiation. The sequence is that of Receptor tyrosine-protein kinase erbB-3 (ERBB3) from Homo sapiens (Human).